The primary structure comprises 86 residues: uncharacterized protein (86 aa).

2 4Fe-4S ferredoxin-type domains span residues 1–29 (MALL…IGDE) and 31–65 (YVID…PDPE). [4Fe-4S] cluster is bound by residues C9, C12, C15, C19, C38, C41, C50, and C54.

Requires [4Fe-4S] cluster as cofactor.

This is an uncharacterized protein from Haemophilus influenzae (strain ATCC 51907 / DSM 11121 / KW20 / Rd).